Consider the following 185-residue polypeptide: Ribosome-recycling factor (185 aa).

It belongs to the RRF family.

The protein localises to the cytoplasm. Functionally, responsible for the release of ribosomes from messenger RNA at the termination of protein biosynthesis. May increase the efficiency of translation by recycling ribosomes from one round of translation to another. The polypeptide is Ribosome-recycling factor (Halorhodospira halophila (strain DSM 244 / SL1) (Ectothiorhodospira halophila (strain DSM 244 / SL1))).